An 895-amino-acid chain; its full sequence is DNA mismatch repair protein MutS (895 aa).

Gly632 to Ser639 is a binding site for ATP. The tract at residues Val824–Gln849 is disordered. Residues Asn837–Gln849 show a composition bias toward polar residues.

The protein belongs to the DNA mismatch repair MutS family.

Its function is as follows. This protein is involved in the repair of mismatches in DNA. It is possible that it carries out the mismatch recognition step. This protein has a weak ATPase activity. This Desulforapulum autotrophicum (strain ATCC 43914 / DSM 3382 / VKM B-1955 / HRM2) (Desulfobacterium autotrophicum) protein is DNA mismatch repair protein MutS.